We begin with the raw amino-acid sequence, 101 residues long: PAT complex subunit Asterix (101 aa).

Residues 1–26 (MADPRRPARVTRYKPPTTESNPALED) are disordered. Over 1-27 (MADPRRPARVTRYKPPTTESNPALEDP) the chain is Cytoplasmic. Residues 28-46 (TPDYMNLLGMVFSMCGLML) form a helical membrane-spanning segment. Residue Lys47 is a topological domain, lumenal. Residues 48 to 65 (LKWCAWIAVYCSFISFAN) traverse the membrane as a helical segment. The Cytoplasmic segment spans residues 66-69 (SRSS). The chain crosses the membrane as a helical span at residues 70–90 (EDTKQMMSSFMLSISAVVMSY). Topologically, residues 91 to 101 (LQNPQPMSPPW) are lumenal.

The protein belongs to the Asterix family. As to quaternary structure, component of the multi-pass translocon (MPT) complex.

The protein resides in the endoplasmic reticulum membrane. In terms of biological role, component of the multi-pass translocon (MPT) complex that mediates insertion of multi-pass membrane proteins into the lipid bilayer of membranes. The MPT complex takes over after the SEC61 complex: following membrane insertion of the first few transmembrane segments of proteins by the SEC61 complex, the MPT complex occludes the lateral gate of the SEC61 complex to promote insertion of subsequent transmembrane regions. This is PAT complex subunit Asterix (WDR83OS) from Gallus gallus (Chicken).